The sequence spans 286 residues: 4-hydroxybenzoate octaprenyltransferase (286 aa).

A run of 7 helical transmembrane segments spans residues 22–42 (IGTL…EKAM), 45–65 (LSVL…GCVI), 98–118 (LFIV…LYTI), 143–163 (FFLG…TIEA), 213–233 (IIAL…YLSQ), 238–255 (YFIV…QCRL), and 266–286 (NAFL…LFGI).

Belongs to the UbiA prenyltransferase family. Requires Mg(2+) as cofactor.

Its subcellular location is the cell inner membrane. It carries out the reaction all-trans-octaprenyl diphosphate + 4-hydroxybenzoate = 4-hydroxy-3-(all-trans-octaprenyl)benzoate + diphosphate. It participates in cofactor biosynthesis; ubiquinone biosynthesis. Functionally, catalyzes the prenylation of para-hydroxybenzoate (PHB) with an all-trans polyprenyl group. Mediates the second step in the final reaction sequence of ubiquinone-8 (UQ-8) biosynthesis, which is the condensation of the polyisoprenoid side chain with PHB, generating the first membrane-bound Q intermediate 3-octaprenyl-4-hydroxybenzoate. The polypeptide is 4-hydroxybenzoate octaprenyltransferase (Histophilus somni (strain 129Pt) (Haemophilus somnus)).